A 378-amino-acid chain; its full sequence is UPF0754 membrane protein Exig_0680 (378 aa).

Transmembrane regions (helical) follow at residues 5 to 25 (VDLV…GAVT) and 357 to 377 (ITWL…ILLI).

It belongs to the UPF0754 family.

The protein localises to the cell membrane. This Exiguobacterium sibiricum (strain DSM 17290 / CCUG 55495 / CIP 109462 / JCM 13490 / 255-15) protein is UPF0754 membrane protein Exig_0680.